A 107-amino-acid chain; its full sequence is U1-lycotoxin-Ls1m (107 aa).

The signal sequence occupies residues 1–20 (MMKVLVVVALLVTLISYSSS). Positions 21–41 (EGIDDLEADELLSLMANEQTR) are excised as a propeptide. 4 disulfide bridges follow: Cys44-Cys59, Cys51-Cys68, Cys58-Cys86, and Cys70-Cys84.

It belongs to the neurotoxin 19 (CSTX) family. 04 (U1-Lctx) subfamily. In terms of tissue distribution, expressed by the venom gland.

It localises to the secreted. The sequence is that of U1-lycotoxin-Ls1m from Lycosa singoriensis (Wolf spider).